The sequence spans 450 residues: Involucrin (450 aa).

Polar residues predominate over residues 1 to 19 (MSQQHTLPVTLPPTLSQEL). Disordered regions lie at residues 1 to 43 (MSQQ…LPAP), 77 to 370 (QLQQ…EQLK), and 422 to 450 (PGQV…EPEV). Basic and acidic residues predominate over residues 86–108 (QEVHLAKHQELQELQEQELHLGK). Positions 120 to 135 (GKQQQQQESQEQELYL) are enriched in low complexity. Basic and acidic residues-rich tracts occupy residues 187–200 (LGKR…ELHL) and 264–281 (QELH…ELHL). Residues 295 to 344 (GEAAAAGVTGAGPAASKAARRATGAGTAPGKAAAAAGATGAGTAATAPAT) show a composition bias toward low complexity. The segment covering 345 to 370 (AEERQKAESLEQQLEQEKAQREEQLK) has biased composition (basic and acidic residues).

Belongs to the involucrin family. Directly or indirectly cross-linked to cornifelin (CNFN). Post-translationally, substrate of transglutaminase. Specific glutamines or lysines are cross-linked to keratins, desmoplakin and to inter involucrin molecules. Keratinocytes of epidermis and other stratified squamous epithelia.

Its subcellular location is the cytoplasm. Functionally, part of the insoluble cornified cell envelope (CE) of stratified squamous epithelia. The chain is Involucrin (IVL) from Lemur catta (Ring-tailed lemur).